The sequence spans 603 residues: Sulfoacetaldehyde acetyltransferase (603 aa).

Belongs to the TPP enzyme family. The cofactor is Mg(2+). Requires thiamine diphosphate as cofactor.

The enzyme catalyses acetyl phosphate + sulfite + H(+) = sulfoacetaldehyde + phosphate. Its function is as follows. Catalyzes the degradation of sulfoacetaldehyde into sulfite and acetyl phosphate. Involved in sulfolactate degradation. This is Sulfoacetaldehyde acetyltransferase from Roseovarius nubinhibens (strain ATCC BAA-591 / DSM 15170 / ISM).